The following is a 360-amino-acid chain: 3-isopropylmalate dehydrogenase (360 aa).

76 to 89 (GPKWDTIERDIRPE) contributes to the NAD(+) binding site. Residues Arg-96, Arg-106, Arg-134, and Asp-224 each contribute to the substrate site. Mg(2+) is bound by residues Asp-224, Asp-248, and Asp-252. 282–294 (GSAPDIAGKGIAN) contacts NAD(+).

The protein belongs to the isocitrate and isopropylmalate dehydrogenases family. LeuB type 1 subfamily. Homodimer. Mg(2+) serves as cofactor. The cofactor is Mn(2+).

The protein localises to the cytoplasm. It catalyses the reaction (2R,3S)-3-isopropylmalate + NAD(+) = 4-methyl-2-oxopentanoate + CO2 + NADH. It functions in the pathway amino-acid biosynthesis; L-leucine biosynthesis; L-leucine from 3-methyl-2-oxobutanoate: step 3/4. In terms of biological role, catalyzes the oxidation of 3-carboxy-2-hydroxy-4-methylpentanoate (3-isopropylmalate) to 3-carboxy-4-methyl-2-oxopentanoate. The product decarboxylates to 4-methyl-2 oxopentanoate. This Pseudomonas savastanoi pv. phaseolicola (strain 1448A / Race 6) (Pseudomonas syringae pv. phaseolicola (strain 1448A / Race 6)) protein is 3-isopropylmalate dehydrogenase.